The following is a 577-amino-acid chain: Arginine--tRNA ligase (577 aa).

A 'HIGH' region motif is present at residues 122-132; that stretch reads PNVAKEMHVGH.

Belongs to the class-I aminoacyl-tRNA synthetase family. Monomer.

The protein resides in the cytoplasm. The enzyme catalyses tRNA(Arg) + L-arginine + ATP = L-arginyl-tRNA(Arg) + AMP + diphosphate. This is Arginine--tRNA ligase from Escherichia fergusonii (strain ATCC 35469 / DSM 13698 / CCUG 18766 / IAM 14443 / JCM 21226 / LMG 7866 / NBRC 102419 / NCTC 12128 / CDC 0568-73).